The primary structure comprises 576 residues: Sulfite reductase [NADPH] hemoprotein beta-component (576 aa).

[4Fe-4S] cluster contacts are provided by C435, C441, C480, and C484. C484 contacts siroheme.

Belongs to the nitrite and sulfite reductase 4Fe-4S domain family. In terms of assembly, alpha(8)-beta(8). The alpha component is a flavoprotein, the beta component is a hemoprotein. It depends on siroheme as a cofactor. [4Fe-4S] cluster serves as cofactor.

The catalysed reaction is hydrogen sulfide + 3 NADP(+) + 3 H2O = sulfite + 3 NADPH + 4 H(+). It functions in the pathway sulfur metabolism; hydrogen sulfide biosynthesis; hydrogen sulfide from sulfite (NADPH route): step 1/1. Component of the sulfite reductase complex that catalyzes the 6-electron reduction of sulfite to sulfide. This is one of several activities required for the biosynthesis of L-cysteine from sulfate. This is Sulfite reductase [NADPH] hemoprotein beta-component from Yersinia pestis bv. Antiqua (strain Antiqua).